The chain runs to 534 residues: Importin subunit alpha-1b (534 aa).

The IBB domain occupies 1-58 (MSLRPSERAEVRRSRYKVAVDADEGRRRREDNMVEIRKSRREESLLKKRRDGLPAAAA). ARM repeat units lie at residues 111 to 151 (SPPI…NIAS), 154 to 193 (SDNT…NVAG), 196 to 236 (PKCR…NFCR), 238 to 277 (KPQP…YLSD), 280 to 319 (NDKI…NIVT), 322 to 362 (DMQT…NITA), 365 to 404 (REQI…NATS), and 408 to 447 (HDQI…NILK). The disordered stretch occupies residues 505–534 (DAMPSGDNAQNGFNFGNQQPNVPSGGFNFG). A compositionally biased stretch (low complexity) spans 514–523 (QNGFNFGNQQ).

This sequence belongs to the importin alpha family. Forms a complex with importin subunit beta-1. The whole complex, most stable and composed of importin alpha and importin beta, is referred to as PTAC or pore targeting complex. As to expression, highly expressed in root and weakly in callus, etiolated leaf and green leaf.

It is found in the cytoplasm. The protein resides in the perinuclear region. Functions in nuclear protein import. Binds specifically and directly to substrates containing either a simple or bipartite NLS motif. Promotes docking of import substrates to the nuclear envelope. In conjunction with importin beta-1, mediates the nuclear envelope docking, and the subsequent translocation into the nucleus of the constitutive morphogenetic 1 (COP1) protein containing bipartite NLS motif. The chain is Importin subunit alpha-1b from Oryza sativa subsp. japonica (Rice).